An 86-amino-acid polypeptide reads, in one-letter code: MIOREX complex component 7 (86 aa).

In terms of assembly, associates with the mitochondrial ribosome.

It is found in the mitochondrion. Its function is as follows. Component of MIOREX complexes, large expressome-like assemblies of ribosomes with factors involved in all the steps of post-transcriptional gene expression. In Saccharomyces cerevisiae (strain ATCC 204508 / S288c) (Baker's yeast), this protein is MIOREX complex component 7.